Here is a 484-residue protein sequence, read N- to C-terminus: Pentatricopeptide repeat-containing protein At1g09190 (484 aa).

PPR repeat units follow at residues 66-100 (NVLVFNAMIKCYSLVGPPLESLSFFSSMKSRGIWA), 101-135 (DEYTYAPLLKSCSSLSDLRFGKCVHGELIRTGFHR), 136-166 (LGKIRIGVVELYTSGGRMGDAQKVFDEMSER), 167-197 (NVVVWNLMIRGFCDSGDVERGLHLFKQMSER), 198-232 (SIVSWNSMISSLSKCGRDREALELFCEMIDQGFDP), 233-267 (DEATVVTVLPISASLGVLDTGKWIHSTAESSGLFK), 269-299 (FITVGNALVDFYCKSGDLEAATAIFRKMQRR), 300-334 (NVVSWNTLISGSAVNGKGEFGIDLFDAMIEEGKVA), 336-366 (NEATFLGVLACCSYTGQVERGEELFGLMMER), and 372-406 (RTEHYGAMVDLMSRSGRITEAFKFLKNMPVNANAA). A type E motif region spans residues 407 to 482 (MWGSLLSACR…STGQSTICDV (76 aa)).

This sequence belongs to the PPR family. PCMP-E subfamily.

This is Pentatricopeptide repeat-containing protein At1g09190 (PCMP-E70) from Arabidopsis thaliana (Mouse-ear cress).